Here is a 410-residue protein sequence, read N- to C-terminus: Pyrophosphate--fructose 6-phosphate 1-phosphotransferase (410 aa).

A diphosphate-binding site is contributed by glycine 12. Aspartate 121 provides a ligand contact to Mg(2+). Substrate is bound by residues 149 to 151, 194 to 196, glutamate 266, and 323 to 326; these read TID, MGR, and YFSR. The active-site Proton acceptor is the aspartate 151.

This sequence belongs to the phosphofructokinase type A (PFKA) family. PPi-dependent PFK group II subfamily. Clade 'P' sub-subfamily. Homodimer or homotetramer. Mg(2+) is required as a cofactor.

It localises to the cytoplasm. The enzyme catalyses beta-D-fructose 6-phosphate + diphosphate = beta-D-fructose 1,6-bisphosphate + phosphate + H(+). Its pathway is carbohydrate degradation; glycolysis; D-glyceraldehyde 3-phosphate and glycerone phosphate from D-glucose: step 3/4. With respect to regulation, non-allosteric. In terms of biological role, catalyzes the phosphorylation of D-fructose 6-phosphate, the first committing step of glycolysis. Uses inorganic phosphate (PPi) as phosphoryl donor instead of ATP like common ATP-dependent phosphofructokinases (ATP-PFKs), which renders the reaction reversible, and can thus function both in glycolysis and gluconeogenesis. Consistently, PPi-PFK can replace the enzymes of both the forward (ATP-PFK) and reverse (fructose-bisphosphatase (FBPase)) reactions. The polypeptide is Pyrophosphate--fructose 6-phosphate 1-phosphotransferase (Mastigamoeba balamuthi (Phreatamoeba balamuthi)).